We begin with the raw amino-acid sequence, 312 residues long: Aspartate carbamoyltransferase catalytic subunit (312 aa).

The carbamoyl phosphate site is built by arginine 55 and threonine 56. Residue lysine 83 participates in L-aspartate binding. 3 residues coordinate carbamoyl phosphate: arginine 105, histidine 138, and glutamine 141. Residues arginine 171 and arginine 225 each coordinate L-aspartate. Residues glycine 266 and proline 267 each contribute to the carbamoyl phosphate site.

Belongs to the aspartate/ornithine carbamoyltransferase superfamily. ATCase family. In terms of assembly, heterododecamer (2C3:3R2) of six catalytic PyrB chains organized as two trimers (C3), and six regulatory PyrI chains organized as three dimers (R2).

The catalysed reaction is carbamoyl phosphate + L-aspartate = N-carbamoyl-L-aspartate + phosphate + H(+). It participates in pyrimidine metabolism; UMP biosynthesis via de novo pathway; (S)-dihydroorotate from bicarbonate: step 2/3. Its function is as follows. Catalyzes the condensation of carbamoyl phosphate and aspartate to form carbamoyl aspartate and inorganic phosphate, the committed step in the de novo pyrimidine nucleotide biosynthesis pathway. This chain is Aspartate carbamoyltransferase catalytic subunit, found in Corynebacterium glutamicum (strain ATCC 13032 / DSM 20300 / JCM 1318 / BCRC 11384 / CCUG 27702 / LMG 3730 / NBRC 12168 / NCIMB 10025 / NRRL B-2784 / 534).